A 449-amino-acid chain; its full sequence is Phosphoglucosamine mutase (449 aa).

Serine 101 functions as the Phosphoserine intermediate in the catalytic mechanism. Mg(2+) is bound by residues serine 101, aspartate 241, aspartate 243, and aspartate 245. The residue at position 101 (serine 101) is a Phosphoserine.

It belongs to the phosphohexose mutase family. It depends on Mg(2+) as a cofactor. In terms of processing, activated by phosphorylation.

The catalysed reaction is alpha-D-glucosamine 1-phosphate = D-glucosamine 6-phosphate. Its function is as follows. Catalyzes the conversion of glucosamine-6-phosphate to glucosamine-1-phosphate. The sequence is that of Phosphoglucosamine mutase from Acetivibrio thermocellus (strain ATCC 27405 / DSM 1237 / JCM 9322 / NBRC 103400 / NCIMB 10682 / NRRL B-4536 / VPI 7372) (Clostridium thermocellum).